Consider the following 571-residue polypeptide: Dihydroxy-acid dehydratase (571 aa).

Cys56 is a binding site for [2Fe-2S] cluster. Asp88 is a binding site for Mg(2+). Position 129 (Cys129) interacts with [2Fe-2S] cluster. Positions 130 and 131 each coordinate Mg(2+). Lys131 bears the N6-carboxylysine mark. Cys201 is a [2Fe-2S] cluster binding site. A Mg(2+)-binding site is contributed by Glu452. Ser478 (proton acceptor) is an active-site residue.

It belongs to the IlvD/Edd family. Homodimer. [2Fe-2S] cluster serves as cofactor. Requires Mg(2+) as cofactor.

It carries out the reaction (2R)-2,3-dihydroxy-3-methylbutanoate = 3-methyl-2-oxobutanoate + H2O. The enzyme catalyses (2R,3R)-2,3-dihydroxy-3-methylpentanoate = (S)-3-methyl-2-oxopentanoate + H2O. Its pathway is amino-acid biosynthesis; L-isoleucine biosynthesis; L-isoleucine from 2-oxobutanoate: step 3/4. It functions in the pathway amino-acid biosynthesis; L-valine biosynthesis; L-valine from pyruvate: step 3/4. In terms of biological role, functions in the biosynthesis of branched-chain amino acids. Catalyzes the dehydration of (2R,3R)-2,3-dihydroxy-3-methylpentanoate (2,3-dihydroxy-3-methylvalerate) into 2-oxo-3-methylpentanoate (2-oxo-3-methylvalerate) and of (2R)-2,3-dihydroxy-3-methylbutanoate (2,3-dihydroxyisovalerate) into 2-oxo-3-methylbutanoate (2-oxoisovalerate), the penultimate precursor to L-isoleucine and L-valine, respectively. The protein is Dihydroxy-acid dehydratase of Streptococcus suis (strain 98HAH33).